A 106-amino-acid chain; its full sequence is Cell cycle protein GpsB (106 aa).

Residues 34 to 67 (LDVIIQDYDNFKQEIDRLKAENEKLKKSTPAVEQ) adopt a coiled-coil conformation. Residues 55-83 (NEKLKKSTPAVEQSRSRSQQPPTSQVNYD) are disordered. Over residues 70–79 (SRSQQPPTSQ) the composition is skewed to low complexity.

The protein belongs to the GpsB family. As to quaternary structure, forms polymers through the coiled coil domains. Interacts with PBP1, MreC and EzrA.

It localises to the cytoplasm. Functionally, divisome component that associates with the complex late in its assembly, after the Z-ring is formed, and is dependent on DivIC and PBP2B for its recruitment to the divisome. Together with EzrA, is a key component of the system that regulates PBP1 localization during cell cycle progression. Its main role could be the removal of PBP1 from the cell pole after pole maturation is completed. Also contributes to the recruitment of PBP1 to the division complex. Not essential for septum formation. The chain is Cell cycle protein GpsB from Oceanobacillus iheyensis (strain DSM 14371 / CIP 107618 / JCM 11309 / KCTC 3954 / HTE831).